A 939-amino-acid chain; its full sequence is Translation initiation factor IF-2 (939 aa).

Positions 57-274 (RLKPAAPAAP…APTKKNEQKI (218 aa)) are disordered. Basic and acidic residues-rich tracts occupy residues 83–122 (MEPKEEPQKEVKESVKEAPESLPESPKEEAFEAEIPKESV) and 129–138 (LEQEPPKEEL). 2 stretches are compositionally biased toward polar residues: residues 146-158 (ESASETLSDSNPL) and 170-180 (VATTLATQTDA). A compositionally biased stretch (basic and acidic residues) spans 208 to 227 (KRSEEPAPKADRPSLEEART). Over residues 252-262 (ARKKKKEKKKP) the composition is skewed to basic residues. The 170-residue stretch at 438–607 (ERPPVVTIMG…LVQSELLELK (170 aa)) folds into the tr-type G domain. The segment at 447–454 (GHVDHGKT) is G1. 447–454 (GHVDHGKT) lines the GTP pocket. Residues 472-476 (GITQH) form a G2 region. The tract at residues 493 to 496 (DTPG) is G3. GTP contacts are provided by residues 493–497 (DTPGH) and 547–550 (NKVD). Positions 547–550 (NKVD) are G4. Residues 583–585 (SAK) form a G5 region.

It belongs to the TRAFAC class translation factor GTPase superfamily. Classic translation factor GTPase family. IF-2 subfamily.

It is found in the cytoplasm. In terms of biological role, one of the essential components for the initiation of protein synthesis. Protects formylmethionyl-tRNA from spontaneous hydrolysis and promotes its binding to the 30S ribosomal subunits. Also involved in the hydrolysis of GTP during the formation of the 70S ribosomal complex. The polypeptide is Translation initiation factor IF-2 (Wolinella succinogenes (strain ATCC 29543 / DSM 1740 / CCUG 13145 / JCM 31913 / LMG 7466 / NCTC 11488 / FDC 602W) (Vibrio succinogenes)).